A 406-amino-acid chain; its full sequence is Acetylornithine/succinyldiaminopimelate aminotransferase (406 aa).

Pyridoxal 5'-phosphate-binding positions include 108-109 (GT) and F141. Residue R144 participates in N(2)-acetyl-L-ornithine binding. 226–229 (DEVQ) provides a ligand contact to pyridoxal 5'-phosphate. Position 255 is an N6-(pyridoxal phosphate)lysine (K255). Residue S283 participates in N(2)-acetyl-L-ornithine binding. T284 serves as a coordination point for pyridoxal 5'-phosphate.

It belongs to the class-III pyridoxal-phosphate-dependent aminotransferase family. ArgD subfamily. In terms of assembly, homodimer. The cofactor is pyridoxal 5'-phosphate.

Its subcellular location is the cytoplasm. The enzyme catalyses N(2)-acetyl-L-ornithine + 2-oxoglutarate = N-acetyl-L-glutamate 5-semialdehyde + L-glutamate. It catalyses the reaction N-succinyl-(2S,6S)-2,6-diaminopimelate + 2-oxoglutarate = (S)-2-succinylamino-6-oxoheptanedioate + L-glutamate. It participates in amino-acid biosynthesis; L-arginine biosynthesis; N(2)-acetyl-L-ornithine from L-glutamate: step 4/4. The protein operates within amino-acid biosynthesis; L-lysine biosynthesis via DAP pathway; LL-2,6-diaminopimelate from (S)-tetrahydrodipicolinate (succinylase route): step 2/3. Functionally, involved in both the arginine and lysine biosynthetic pathways. This Escherichia coli O157:H7 protein is Acetylornithine/succinyldiaminopimelate aminotransferase.